Here is a 253-residue protein sequence, read N- to C-terminus: LexA repressor (253 aa).

A disordered region spans residues 1 to 33 (MTSQGRGTRRGGARGNVRAFPENPADAAGLTPR). The H-T-H motif DNA-binding region spans 54 to 74 (VREIGEAVGLTSTSSVAHQLK). Catalysis depends on for autocatalytic cleavage activity residues Ser-177 and Lys-214.

This sequence belongs to the peptidase S24 family. Homodimer.

It catalyses the reaction Hydrolysis of Ala-|-Gly bond in repressor LexA.. Represses a number of genes involved in the response to DNA damage (SOS response), including recA and lexA. In the presence of single-stranded DNA, RecA interacts with LexA causing an autocatalytic cleavage which disrupts the DNA-binding part of LexA, leading to derepression of the SOS regulon and eventually DNA repair. The chain is LexA repressor from Frankia alni (strain DSM 45986 / CECT 9034 / ACN14a).